A 72-amino-acid polypeptide reads, in one-letter code: Large ribosomal subunit protein bL31 (72 aa).

Zn(2+) contacts are provided by C16, C18, C37, and C40.

It belongs to the bacterial ribosomal protein bL31 family. Type A subfamily. Part of the 50S ribosomal subunit. Requires Zn(2+) as cofactor.

Functionally, binds the 23S rRNA. The polypeptide is Large ribosomal subunit protein bL31 (Buchnera aphidicola subsp. Acyrthosiphon pisum (strain Tuc7)).